A 622-amino-acid polypeptide reads, in one-letter code: Chaperone protein HscA homolog (622 aa).

It belongs to the heat shock protein 70 family.

Chaperone involved in the maturation of iron-sulfur cluster-containing proteins. Has a low intrinsic ATPase activity which is markedly stimulated by HscB. The protein is Chaperone protein HscA homolog of Burkholderia ambifaria (strain MC40-6).